The following is a 168-amino-acid chain: Peptide deformylase 2 (168 aa).

Fe cation is bound by residues cysteine 91 and histidine 133. The active site involves glutamate 134. Fe cation is bound at residue histidine 137.

This sequence belongs to the polypeptide deformylase family. Requires Fe(2+) as cofactor.

It catalyses the reaction N-terminal N-formyl-L-methionyl-[peptide] + H2O = N-terminal L-methionyl-[peptide] + formate. Functionally, removes the formyl group from the N-terminal Met of newly synthesized proteins. Requires at least a dipeptide for an efficient rate of reaction. N-terminal L-methionine is a prerequisite for activity but the enzyme has broad specificity at other positions. The chain is Peptide deformylase 2 from Vibrio cholerae serotype O1 (strain ATCC 39315 / El Tor Inaba N16961).